We begin with the raw amino-acid sequence, 317 residues long: MTSTLHTTKKVLSIQSHVIHGYVGNKAATFPLQYRGWDVDVLNTVQFSNHSGYAHFTGFKCSTEELVDIVEKGLIGSLRIKYDAVLSGYLPNVQALQKVAGIVGQLCEGSENVKWILDPVLGDNGRLYVDRECVAVYQDILQNFKIFLATPNQFEMELLVGMSIRTLDDAKQAFKLFHKKYPRVSRIVVTSLELSEFLSNDTYVVAGFDCSASEEIFFYEIPKINAKFSGSGDLISAMLTDSLLGDRRCTQLSLSASLGQVLWLVTSILQKTYDLNIAERGPQDSTIDIKDLKLIQCRDILKQDLIPSIGKPKTIKI.

Substrate is bound by residues Ser-16 and Tyr-128. Residues 190–191 (TS) and 220–232 (EIPK…SGSG) contribute to the ATP site. Asp-233 serves as a coordination point for substrate.

Belongs to the pyridoxine kinase family. Requires a divalent metal cation as cofactor.

Its subcellular location is the cytoplasm. It is found in the nucleus. It catalyses the reaction pyridoxal + ATP = pyridoxal 5'-phosphate + ADP + H(+). Required for synthesis of pyridoxal-5-phosphate from vitamin B6. Important for bud site selection. This is Putative pyridoxal kinase BUD17 (BUD17) from Saccharomyces cerevisiae (strain ATCC 204508 / S288c) (Baker's yeast).